Reading from the N-terminus, the 388-residue chain is Flap endonuclease 1 (388 aa).

Residues 1 to 105 (MGIKNLTSLI…GELAKRYARR (105 aa)) are N-domain. Position 34 (Asp34) interacts with Mg(2+). DNA is bound at residue Arg71. The Mg(2+) site is built by Asp87, Glu159, Glu161, Asp180, and Asp182. The segment at 123–254 (DVQKFQKRTI…KKSFDMITKH (132 aa)) is I-domain. Residue Glu159 participates in DNA binding. DNA-binding residues include Gly232 and Asp234. Asp234 serves as a coordination point for Mg(2+). An interaction with PCNA region spans residues 338-346 (VQTRIDTFF). The disordered stretch occupies residues 349 to 388 (IKRPRDEDAGSAKKKQKTVAKPGAAGSKKKPAAKKAAGKK). Residues 375–388 (SKKKPAAKKAAGKK) are compositionally biased toward basic residues.

Belongs to the XPG/RAD2 endonuclease family. FEN1 subfamily. Interacts with PCNA. Three molecules of repG bind to one PCNA trimer with each molecule binding to one PCNA monomer. PCNA stimulates the nuclease activity without altering cleavage specificity. Mg(2+) serves as cofactor. Post-translationally, phosphorylated. Phosphorylation upon DNA damage induces relocalization to the nuclear plasma.

It localises to the nucleus. Its subcellular location is the nucleolus. It is found in the nucleoplasm. The protein localises to the mitochondrion. In terms of biological role, structure-specific nuclease with 5'-flap endonuclease and 5'-3' exonuclease activities involved in DNA replication and repair. During DNA replication, cleaves the 5'-overhanging flap structure that is generated by displacement synthesis when DNA polymerase encounters the 5'-end of a downstream Okazaki fragment. It enters the flap from the 5'-end and then tracks to cleave the flap base, leaving a nick for ligation. Also involved in the long patch base excision repair (LP-BER) pathway, by cleaving within the apurinic/apyrimidinic (AP) site-terminated flap. Acts as a genome stabilization factor that prevents flaps from equilibrating into structures that lead to duplications and deletions. Also possesses 5'-3' exonuclease activity on nicked or gapped double-stranded DNA, and exhibits RNase H activity. Also involved in replication and repair of rDNA and in repairing mitochondrial DNA. The polypeptide is Flap endonuclease 1 (Heterostelium pallidum (strain ATCC 26659 / Pp 5 / PN500) (Cellular slime mold)).